A 448-amino-acid polypeptide reads, in one-letter code: Trigger factor (448 aa).

Residues 172–257 (GDRVTVDFVG…MKKIEWPHMP (86 aa)) enclose the PPIase FKBP-type domain.

It belongs to the FKBP-type PPIase family. Tig subfamily.

It is found in the cytoplasm. It carries out the reaction [protein]-peptidylproline (omega=180) = [protein]-peptidylproline (omega=0). Involved in protein export. Acts as a chaperone by maintaining the newly synthesized protein in an open conformation. Functions as a peptidyl-prolyl cis-trans isomerase. The protein is Trigger factor of Burkholderia vietnamiensis (strain G4 / LMG 22486) (Burkholderia cepacia (strain R1808)).